Here is a 666-residue protein sequence, read N- to C-terminus: Probable cytochrome c oxidase subunit 1 (666 aa).

Helical transmembrane passes span 16–36 and 57–77; these read IPLI…VWVV and IGVM…SDAI. H105 provides a ligand contact to heme b. The next 13 helical transmembrane spans lie at 108-128, 142-162, 192-212, 234-254, 277-297, 315-335, 346-366, 380-400, 413-433, 456-476, 493-513, 591-611, and 612-632; these read IMIF…VVPL, SVGF…LVIG, SLQI…TTVL, SNLL…MLLL, LIWA…FGIF, MVLA…HHFF, IFGI…YNWL, MLWA…GVLV, MFLV…GAFA, FWFT…AGML, WMLV…CQIM, SPTG…LIWH, and IWWM…VFAW. Cu cation-binding residues include H283, Y287, H332, and H333. Residues 283–287 constitute a cross-link (1'-histidyl-3'-tyrosine (His-Tyr)); it reads HPEVY. Heme b-binding residues include H418 and H420.

Belongs to the heme-copper respiratory oxidase family.

The protein resides in the cell membrane. The catalysed reaction is 4 Fe(II)-[cytochrome c] + O2 + 8 H(+)(in) = 4 Fe(III)-[cytochrome c] + 2 H2O + 4 H(+)(out). The protein operates within energy metabolism; oxidative phosphorylation. The protein is Probable cytochrome c oxidase subunit 1 of Bradyrhizobium diazoefficiens (strain JCM 10833 / BCRC 13528 / IAM 13628 / NBRC 14792 / USDA 110).